We begin with the raw amino-acid sequence, 39 residues long: Photosystem II reaction center protein L (39 aa).

The helical transmembrane segment at 18–38 (SLYLGLLVVFTTGILFSSYFF) threads the bilayer.

This sequence belongs to the PsbL family. PSII is composed of 1 copy each of membrane proteins PsbA, PsbB, PsbC, PsbD, PsbE, PsbF, PsbH, PsbI, PsbJ, PsbK, PsbL, PsbM, PsbT, PsbX, PsbY, PsbZ, Psb30/Ycf12, peripheral proteins PsbO, CyanoQ (PsbQ), PsbU, PsbV and a large number of cofactors. It forms dimeric complexes.

Its subcellular location is the cellular thylakoid membrane. In terms of biological role, one of the components of the core complex of photosystem II (PSII). PSII is a light-driven water:plastoquinone oxidoreductase that uses light energy to abstract electrons from H(2)O, generating O(2) and a proton gradient subsequently used for ATP formation. It consists of a core antenna complex that captures photons, and an electron transfer chain that converts photonic excitation into a charge separation. This subunit is found at the monomer-monomer interface and is required for correct PSII assembly and/or dimerization. In Synechococcus sp. (strain WH7803), this protein is Photosystem II reaction center protein L.